We begin with the raw amino-acid sequence, 59 residues long: Inner kinetochore subunit fta6 (59 aa).

Component of the inner kinetochore constitutive centromere-associated network (CCAN) (also known as central kinetochore Sim4 complex in fission yeast), which is composed of at least cnl2, cnp3, cnp20, fta1, fta2, fta3, fta4, fta6, fta7, mal2, mhf1, mhf2, mis6, mis15, mis17, sim4 and wip1.

It localises to the nucleus. Its subcellular location is the chromosome. The protein resides in the centromere. The protein localises to the kinetochore. It is found in the cytoplasm. It localises to the cytoskeleton. Its subcellular location is the microtubule organizing center. The protein resides in the spindle pole body. Its function is as follows. Component of the kinetochore, a multiprotein complex that assembles on centromeric DNA and attaches chromosomes to spindle microtubules, mediating chromosome segregation and sister chromatid segregation during meiosis and mitosis. Component of the inner kinetochore constitutive centromere-associated network (CCAN), which serves as a structural platform for outer kinetochore assembly. The polypeptide is Inner kinetochore subunit fta6 (fta6) (Schizosaccharomyces pombe (strain 972 / ATCC 24843) (Fission yeast)).